The sequence spans 334 residues: Forkhead box protein N2 (334 aa).

2 disordered regions span residues 1–52 (MGPV…SGTT) and 83–108 (SPLYDIEGDLSPSGCQTPEKLSASSK). The fork-head DNA-binding region spans 108–204 (KPPYSFSLLI…QALKKQPFSS (97 aa)).

The protein resides in the nucleus. The sequence is that of Forkhead box protein N2 from Xenopus tropicalis (Western clawed frog).